Here is an 802-residue protein sequence, read N- to C-terminus: Pyrophosphate-energized membrane proton pump 2 (802 aa).

A run of 6 helical transmembrane segments spans residues V45 to S65, P66 to T86, Y118 to F138, V160 to V180, A206 to Y226, and L246 to L266. Substrate is bound at residue K273. Mg(2+) contacts are provided by D276, D280, and D306. 5 consecutive transmembrane segments (helical) span residues F348 to L368, M386 to A406, W421 to I441, I468 to V488, and G511 to L531. Mg(2+)-binding residues include D541 and N568. The next 4 membrane-spanning stretches (helical) occupy residues F577 to V597, V615 to A635, G686 to Y706, and V716 to N736. 2 residues coordinate Mg(2+): D743 and D773. Substrate is bound at residue K776. The helical transmembrane segment at S782–L802 threads the bilayer.

It belongs to the H(+)-translocating pyrophosphatase (TC 3.A.10) family. K(+)-insensitive subfamily. As to quaternary structure, monomer. As to expression, ubiquitous. Mostly expressed in cotyledons, roots and flowers. Especially high levels in trichomes, sepals and stamen filaments.

The protein resides in the golgi apparatus membrane. It catalyses the reaction diphosphate + H2O + H(+)(in) = 2 phosphate + 2 H(+)(out). With respect to regulation, activated by Mg(+) but not by K(+). Inhibited by Ca(2+). In terms of biological role, pyrophosphatase active in both inorganic pyrophosphate hydrolysis and H(+) translocation. The protein is Pyrophosphate-energized membrane proton pump 2 (AVPL1) of Arabidopsis thaliana (Mouse-ear cress).